The chain runs to 61 residues: Small ribosomal subunit protein uS14B (61 aa).

Zn(2+) is bound by residues C24, C27, C40, and C43.

Belongs to the universal ribosomal protein uS14 family. Zinc-binding uS14 subfamily. As to quaternary structure, part of the 30S ribosomal subunit. Contacts proteins S3 and S10. Requires Zn(2+) as cofactor.

Its function is as follows. Binds 16S rRNA, required for the assembly of 30S particles and may also be responsible for determining the conformation of the 16S rRNA at the A site. This Oceanobacillus iheyensis (strain DSM 14371 / CIP 107618 / JCM 11309 / KCTC 3954 / HTE831) protein is Small ribosomal subunit protein uS14B.